The chain runs to 144 residues: UPF0225 protein RSc0270 (144 aa).

This sequence belongs to the UPF0225 family.

The polypeptide is UPF0225 protein RSc0270 (Ralstonia nicotianae (strain ATCC BAA-1114 / GMI1000) (Ralstonia solanacearum)).